A 607-amino-acid chain; its full sequence is TOM1-like protein 8 (607 aa).

The 130-residue stretch at 9–138 folds into the VHS domain; sequence ATSDMLIGPD…ELLRAGIVFP (130 aa). The disordered stretch occupies residues 141–175; that stretch reads PQITPSSGQNGPSTRYPQNSRNARQEAIDTSTESE. A GAT domain is found at 175–263; it reads EFPTLSLTEI…LLAKHEAIAS (89 aa). The residue at position 297 (Ser-297) is a Phosphoserine. Polar residues predominate over residues 355–379; that stretch reads NNCESSTPTSNPHANHQKVQQNYSN. Disordered regions lie at residues 355–393, 407–460, and 555–582; these read NNCE…YYGQ, QPSS…SPTH, and DNGN…NKKP. At Ser-410 the chain carries Phosphoserine. The segment covering 448–460 has biased composition (low complexity); that stretch reads QSPSSSPQYSPTH. Residues 555–569 are compositionally biased toward polar residues; it reads DNGNNNTNPYQVSSH.

Belongs to the TOM1 family. As to expression, specifically expressed in siliques and flowers.

Its subcellular location is the membrane. In terms of biological role, might contribute to the loading of the ESCRT machinery. This chain is TOM1-like protein 8, found in Arabidopsis thaliana (Mouse-ear cress).